A 334-amino-acid chain; its full sequence is Formylmethanofuran--tetrahydromethanopterin formyltransferase (334 aa).

This sequence belongs to the FTR family. In terms of assembly, homotetramer.

The protein localises to the cytoplasm. It carries out the reaction N-formylmethanofuran + 5,6,7,8-tetrahydromethanopterin + H(+) = N(5)-formyl-5,6,7,8-tetrahydromethanopterin + methanofuran. It participates in one-carbon metabolism; formaldehyde degradation; formate from formaldehyde (H(4)MPT route): step 4/5. Functionally, catalyzes the transfer of a formyl group from 5-formyl tetrahydromethanopterin (5-formyl-H(4)MPT) to methanofuran (MFR) to produce formylmethanofuran (formyl-MFR) and tetrahydromethanopterin (H(4)MPT). In Rhodopirellula baltica (strain DSM 10527 / NCIMB 13988 / SH1), this protein is Formylmethanofuran--tetrahydromethanopterin formyltransferase.